The primary structure comprises 756 residues: Serine/threonine-protein kinase DCLK1 (756 aa).

A phosphoserine mark is found at serine 32 and serine 36. Threonine 46 bears the Phosphothreonine mark. Doublecortin domains are found at residues 57–143 (KKVR…LEYT) and 186–269 (KLVT…QDDF). The interval 288–393 (ASASRRGTTK…QRGWRREESE (106 aa)) is disordered. A compositionally biased stretch (low complexity) spans 297 to 313 (KSPGPSRRSKSPASTSS). 13 positions are modified to phosphoserine: serine 305, serine 307, serine 330, serine 332, serine 334, serine 337, serine 347, serine 352, serine 353, serine 355, serine 358, cysteine 362, and serine 364. Residues 347 to 364 (SQHGGSSTSLSSTKVCSS) are compositionally biased toward low complexity. Over residues 366–375 (DENDGPGEGD) the composition is skewed to acidic residues. Position 392 is a phosphoserine (serine 392). The 258-residue stretch at 406–663 (YKVGRTIGDG…AVQVLEHPWV (258 aa)) folds into the Protein kinase domain. ATP-binding positions include 412–420 (IGDGNFAVV) and lysine 435. Aspartate 527 (proton acceptor) is an active-site residue. Tyrosine 536 carries the phosphotyrosine modification. Basic and acidic residues predominate over residues 711 to 723 (QVFRRRRNQDVRS). The interval 711–756 (QVFRRRRNQDVRSRYKAQPAPPELNSESEDYSPSSSETVRSPNSPF) is disordered. Phosphoserine occurs at positions 742, 751, and 754.

It belongs to the protein kinase superfamily. CAMK Ser/Thr protein kinase family. CaMK subfamily.

The enzyme catalyses L-seryl-[protein] + ATP = O-phospho-L-seryl-[protein] + ADP + H(+). The catalysed reaction is L-threonyl-[protein] + ATP = O-phospho-L-threonyl-[protein] + ADP + H(+). Functionally, probable kinase that may be involved in a calcium-signaling pathway controlling neuronal migration in the developing brain. May also participate in functions of the mature nervous system. The chain is Serine/threonine-protein kinase DCLK1 (Dclk1) from Mus musculus (Mouse).